The primary structure comprises 208 residues: Imidazoleglycerol-phosphate dehydratase (208 aa).

The disordered stretch occupies residues M1 to A20. A compositionally biased stretch (low complexity) spans V7–G19.

The protein belongs to the imidazoleglycerol-phosphate dehydratase family.

Its subcellular location is the cytoplasm. The enzyme catalyses D-erythro-1-(imidazol-4-yl)glycerol 3-phosphate = 3-(imidazol-4-yl)-2-oxopropyl phosphate + H2O. It participates in amino-acid biosynthesis; L-histidine biosynthesis; L-histidine from 5-phospho-alpha-D-ribose 1-diphosphate: step 6/9. This chain is Imidazoleglycerol-phosphate dehydratase, found in Anaeromyxobacter sp. (strain K).